A 230-amino-acid chain; its full sequence is RING finger protein 141 (230 aa).

A lipid anchor (N-myristoyl glycine) is attached at glycine 2. The RING-type zinc finger occupies 155–192; sequence CCICMDGRADLILPCAHSFCQKCIDKWSDRHRNCPICR.

The protein localises to the membrane. In terms of biological role, may be involved in spermatogenesis. The polypeptide is RING finger protein 141 (RNF141) (Pongo abelii (Sumatran orangutan)).